Reading from the N-terminus, the 320-residue chain is Ino eighty subunit 2 (320 aa).

2 stretches are compositionally biased toward acidic residues: residues 1-12 and 22-35; these read MDSEASDIEAEL and EYID…DIDD. 2 disordered regions span residues 1 to 232 and 244 to 306; these read MDSE…SKKK and ENAR…EGMT. Residues 42–59 show a composition bias toward basic residues; it reads SSRRTARRSVPKGVRTSK. Residue Ser67 is modified to Phosphoserine. Residues 68–80 show a composition bias toward acidic residues; it reads VEVDEDYDEEEDV. A compositionally biased stretch (basic and acidic residues) spans 105 to 116; that stretch reads EKSDIGDSKGND. Residues 117 to 130 show a composition bias toward acidic residues; sequence GEIEDGILEEEESL. Ser129 carries the post-translational modification Phosphoserine. The segment covering 131–147 has biased composition (basic and acidic residues); the sequence is EKELNRGGGKEVEKSEE. The span at 161-174 shows a compositional bias: acidic residues; sequence EEQDGESGGYEDNE. Residues 207 to 217 show a composition bias toward low complexity; the sequence is TDSTRSTTTRS. The segment covering 244–264 has biased composition (basic and acidic residues); it reads ENARKRKNLSEKRLEEEKQDT. The span at 268–278 shows a compositional bias: basic residues; sequence LLKKRAGKSRS.

This sequence belongs to the IES2 family. As to quaternary structure, component of the chromatin-remodeling INO80 complex, at least composed of ARP4, ARP5, ARP8, RVB1, RVB2, TAF14, NHP10, IES1, IES3, IES4, IES6, ACT1, IES2, IES5 and INO80.

Its subcellular location is the nucleus. Its function is as follows. Component of the INO80 complex which remodels chromatin by shifting nucleosomes and is involved in DNA repair. This chain is Ino eighty subunit 2 (IES2), found in Saccharomyces cerevisiae (strain ATCC 204508 / S288c) (Baker's yeast).